Consider the following 424-residue polypeptide: MEGTAPPTPYDPASVARYAPEPDKRPGRTAFQRDRARILHSGALRRLAGKTQVVAPGEGSPVWDASPRTRLTHSLECAQVGRELGAALGCDPDLVEAACLAHDLGHPPFGHNGEQALNAFAEDCGGFEGNAQSLRLLTRIEPKRFTEDGSVGLNLTRATLDAATKYPWPRGAHPAVPASPKFGVYDDDRPVFAWLREDAPGARTCFEAQVMDWADDVAYSVHDVEDGLHAGHIDPNCLLADPEREAVFDAAVGRFVPAGTDHAELAAALDRLLAQDWWPHGYDGSAPAQARLKDATSQLIGRFCLAAEAATRAAYGDGRLTRYAAELVVPRETRMECAVLKAVAVRYVMQRTEQERLRADQRIVVAELAEALTARAPDGLDPQFRALFDAAADDRARKRVVVDQIASLTDASARSLHARLTGHP.

Over residues M1–Y10 the composition is skewed to pro residues. Residues M1 to F31 are disordered. Residues P20–F31 show a composition bias toward basic and acidic residues. In terms of domain architecture, HD spans R70–S220.

It belongs to the dGTPase family. Type 2 subfamily.

This chain is Deoxyguanosinetriphosphate triphosphohydrolase-like protein, found in Streptomyces coelicolor (strain ATCC BAA-471 / A3(2) / M145).